A 32-amino-acid chain; its full sequence is Cyclotide Hyfl-C (32 aa).

Positions 1-32 form a cross-link, cyclopeptide (Gly-Asn); it reads GSPRQCAETCFIGKCYTEELGCTCTAFLCMKN. 3 disulfides stabilise this stretch: C6/C22, C10/C24, and C15/C29.

This sequence belongs to the cyclotide family. Moebius subfamily. Post-translationally, this is a cyclic peptide.

In terms of biological role, probably participates in a plant defense mechanism. The protein is Cyclotide Hyfl-C of Hybanthus floribundus (Greenviolet).